The primary structure comprises 234 residues: Thiamine import ATP-binding protein ThiQ (234 aa).

The ABC transporter domain occupies 2 to 230 (LVLDDVQYTY…HPSKTLQAFV (229 aa)). 32–39 (GPSGAGKS) contributes to the ATP binding site.

This sequence belongs to the ABC transporter superfamily. Thiamine importer (TC 3.A.1.19.1) family. The complex is composed of two ATP-binding proteins (ThiQ), two transmembrane proteins (ThiP) and a solute-binding protein (ThiB).

Its subcellular location is the cell inner membrane. The enzyme catalyses thiamine(out) + ATP + H2O = thiamine(in) + ADP + phosphate + H(+). Part of the ABC transporter complex ThiBPQ involved in thiamine import. Responsible for energy coupling to the transport system. This Vibrio parahaemolyticus serotype O3:K6 (strain RIMD 2210633) protein is Thiamine import ATP-binding protein ThiQ.